We begin with the raw amino-acid sequence, 208 residues long: MSSFQLPKLSYDYDELEPYIDSNTLSIHHGKHHATYVNNLNAALENYSELHNKSLEELLCNLETLPKEIVTAVRNNGGGHYCHSLFWEVMSPRGGGEPNGDVAKVIDYYFNTFDNLKDQLSKAAISRFGSGYGWLVLDGEELSVMSTPNQDTPLQEGKIPLLVIDVWEHAYYLKYQNRRPEFVTNWWHTVNWDRVNEKYLQAIQSQKH.

Residues histidine 28, histidine 83, aspartate 165, and histidine 169 each contribute to the Mn(2+) site.

Belongs to the iron/manganese superoxide dismutase family. As to quaternary structure, homodimer. Requires Mn(2+) as cofactor.

It catalyses the reaction 2 superoxide + 2 H(+) = H2O2 + O2. Its function is as follows. Destroys superoxide anion radicals which are normally produced within the cells and which are toxic to biological systems. In Bacillus anthracis, this protein is Superoxide dismutase [Mn] 2 (sodA2).